Reading from the N-terminus, the 158-residue chain is NAD(P)H-quinone oxidoreductase subunit J, chloroplastic (158 aa).

This sequence belongs to the complex I 30 kDa subunit family. In terms of assembly, NDH is composed of at least 16 different subunits, 5 of which are encoded in the nucleus.

It localises to the plastid. It is found in the chloroplast thylakoid membrane. The catalysed reaction is a plastoquinone + NADH + (n+1) H(+)(in) = a plastoquinol + NAD(+) + n H(+)(out). The enzyme catalyses a plastoquinone + NADPH + (n+1) H(+)(in) = a plastoquinol + NADP(+) + n H(+)(out). Functionally, NDH shuttles electrons from NAD(P)H:plastoquinone, via FMN and iron-sulfur (Fe-S) centers, to quinones in the photosynthetic chain and possibly in a chloroplast respiratory chain. The immediate electron acceptor for the enzyme in this species is believed to be plastoquinone. Couples the redox reaction to proton translocation, and thus conserves the redox energy in a proton gradient. In Capsella bursa-pastoris (Shepherd's purse), this protein is NAD(P)H-quinone oxidoreductase subunit J, chloroplastic.